The chain runs to 1529 residues: DNA-directed RNA polymerase subunit beta' (1529 aa).

Zn(2+) contacts are provided by Cys-156, Cys-158, Cys-183, and Cys-186. 3 residues coordinate Mg(2+): Asp-1328, Asp-1330, and Asp-1332.

This sequence belongs to the RNA polymerase beta' chain family. RpoC1 subfamily. In plastids the minimal PEP RNA polymerase catalytic core is composed of four subunits: alpha, beta, beta', and beta''. When a (nuclear-encoded) sigma factor is associated with the core the holoenzyme is formed, which can initiate transcription. Mg(2+) serves as cofactor. Zn(2+) is required as a cofactor.

It localises to the plastid. The protein localises to the chloroplast. It carries out the reaction RNA(n) + a ribonucleoside 5'-triphosphate = RNA(n+1) + diphosphate. In terms of biological role, DNA-dependent RNA polymerase catalyzes the transcription of DNA into RNA using the four ribonucleoside triphosphates as substrates. The protein is DNA-directed RNA polymerase subunit beta' of Tetradesmus obliquus (Green alga).